The chain runs to 556 residues: Vacuolar protein 8 (556 aa).

Residue Gly2 is the site of N-myristoyl glycine attachment. S-palmitoyl cysteine attachment occurs at residues Cys4, Cys5, and Cys7. 9 ARM repeats span residues 38-74, 75-115, 117-156, 158-197, 199-238, 242-281, 283-322, 324-364, and 408-447; these read NRSEVDFFTDGPLRALSTLVYSENIDLQRSAALAFAE, VTEK…NLAV, DSNKVLIVNMGGLEPLIRQMMSPNIEVQCNAVGCITNLAT, DQNKSKIATSGALIPLTKLAKSKDLRVQRNATGALLNMTH, LENRQELVNAGSVPILVQLLSSTDPDVQYYCTTALSNIAV, NRKKLASTEPKLISQLVQLMDSTSPRVQCQATLALRNLAS, ANYQLEIVRAGGLPNLVTLLNSTHQPLVLAAVACIRNISI, PLNE…NLAA, and DDLKMKLLDSNIIEVLLPLTSSENGEVCGNAAAALANLCS.

This sequence belongs to the beta-catenin family.

The protein resides in the vacuole membrane. Its function is as follows. Functions in both vacuole inheritance and protein targeting from the cytoplasm to vacuole. The protein is Vacuolar protein 8 (VAC8) of Komagataella pastoris (Yeast).